The primary structure comprises 129 residues: Transcriptional activator protein (129 aa).

Positions 1–12 (MRSSSPSQPPSI) are enriched in low complexity. A disordered region spans residues 1–21 (MRSSSPSQPPSIKKAHRQAKR). The Nuclear localization signal motif lies at 13 to 28 (KKAHRQAKRRAIRRRR). Residues 33-50 (CGCSIYFHIDCTGHGFTH) fold into a zinc finger. The disordered stretch occupies residues 84-114 (IHQNEDIPCTNTVQPQPEESVASPQSLPELP). Over residues 92 to 109 (CTNTVQPQPEESVASPQS) the composition is skewed to polar residues. The segment at 115 to 129 (SLDDFDDSFWVNLFK) is transactivation.

Belongs to the geminiviridae transcriptional activator protein family. In terms of assembly, monomer. Homodimer. Homooligomer. Self-interaction correlates with nuclear localization and efficient activation of transcription. Monomers suppress local silencing by interacting with and inactivating host adenosine kinase 2 (ADK2) in the cytoplasm. Interacts with and inhibits host SNF1 kinase. Binds to ssDNA. Post-translationally, phosphorylated.

The protein resides in the host nucleus. It localises to the host cytoplasm. Its function is as follows. Strong activator of the late viral genes promoters. Enhances the expression of the capsid protein and nuclear shuttle protein. Acts as a suppressor of RNA-mediated gene silencing, also known as post-transcriptional gene silencing (PTGS), a mechanism of plant viral defense that limits the accumulation of viral RNAs. Suppresses the host RNA silencing by inhibiting adenosine kinase 2 (ADK2), a kinase involved in a general methylation pathway. Also suppresses the host basal defense by interacting with and inhibiting SNF1 kinase, a key regulator of cell metabolism implicated in innate antiviral defense. Determines pathogenicity. The polypeptide is Transcriptional activator protein (Abutilon (Upland cotton)).